The primary structure comprises 1849 residues: Immunoglobulin A1 protease autotransporter (1849 aa).

A signal peptide spans 1 to 25 (MLNKKFKLNFIALTVAYALTPYTEA). The Peptidase S6 domain occupies 26-343 (ALVRDDVDYQ…NIYKHEFAEK (318 aa)). Residue Ser-299 is part of the active site. Positions 998 to 1538 (VEKRNQTVDT…EPVELPTENA (541 aa)) are disordered. The segment covering 1004-1015 (TVDTTNITTPND) has biased composition (polar residues). Low complexity predominate over residues 1066 to 1077 (EETNTANSTETA). Polar residues-rich tracts occupy residues 1079 to 1097 (KSDT…VPSE) and 1138 to 1151 (VEAN…TQSE). A compositionally biased stretch (basic and acidic residues) spans 1152-1166 (GKTEETQTAETKSEP). Over residues 1167–1184 (TESVTVSENQPEKTVSQS) the composition is skewed to polar residues. The span at 1185–1205 (TEDKVVVEKEEKAKVETEETQ) shows a compositional bias: basic and acidic residues. The segment covering 1237–1268 (ALQQTQPTTVAAAETTSPNSKPAEETQQPSEK) has biased composition (polar residues). Positions 1291–1301 (ETAKVEKEKTQ) are enriched in basic and acidic residues. 3 stretches are compositionally biased toward low complexity: residues 1314–1330 (QEQP…PQAE), 1345–1361 (PQPQ…VPTT), and 1369–1381 (KPAA…AKPQ). Polar residues predominate over residues 1388–1437 (NVSTVNTKEPQSQTSATVSTEQPAKETSSNVEQPAPENSINTGSATTMTE). A compositionally biased stretch (basic and acidic residues) spans 1438 to 1457 (TAEKSDKPQMETVTENDRQP). Residues 1493–1513 (EETTVASTQETTVDNSVSTPK) are compositionally biased toward low complexity. Residues 1597-1849 (NNEGQYNVWI…TAEVKLSFSF (253 aa)) form the Autotransporter domain.

It is found in the periplasm. Its subcellular location is the secreted. The protein localises to the cell surface. The protein resides in the cell outer membrane. It carries out the reaction Cleavage of immunoglobulin A molecules at certain Pro-|-Xaa bonds in the hinge region. No small molecule substrates are known.. Its function is as follows. Virulence factor; cleaves host immunoglobulin A producing intact Fc and Fab fragments. In Haemophilus influenzae, this protein is Immunoglobulin A1 protease autotransporter (iga).